The primary structure comprises 169 residues: Ribosome maturation factor RimM (169 aa).

The PRC barrel domain maps to 96-166; the sequence is EDEFYFADLI…AVVVRPVEVE (71 aa).

This sequence belongs to the RimM family. In terms of assembly, binds ribosomal protein uS19.

It is found in the cytoplasm. An accessory protein needed during the final step in the assembly of 30S ribosomal subunit, possibly for assembly of the head region. Essential for efficient processing of 16S rRNA. May be needed both before and after RbfA during the maturation of 16S rRNA. It has affinity for free ribosomal 30S subunits but not for 70S ribosomes. The chain is Ribosome maturation factor RimM from Acidiphilium cryptum (strain JF-5).